The sequence spans 717 residues: Polyribonucleotide nucleotidyltransferase (717 aa).

D496 and D502 together coordinate Mg(2+). In terms of domain architecture, KH spans 563–622 (PRLLTIKIDPDLIGLVIGPGGKTVKGITEQTGTKIDIDDDGTVTISSTDGEQAEKAKRLI). One can recognise an S1 motif domain in the interval 632-700 (GEVYLGRVTR…SKGRLNLTRL (69 aa)).

It belongs to the polyribonucleotide nucleotidyltransferase family. Requires Mg(2+) as cofactor.

It localises to the cytoplasm. It carries out the reaction RNA(n+1) + phosphate = RNA(n) + a ribonucleoside 5'-diphosphate. Functionally, involved in mRNA degradation. Catalyzes the phosphorolysis of single-stranded polyribonucleotides processively in the 3'- to 5'-direction. The protein is Polyribonucleotide nucleotidyltransferase of Microcystis aeruginosa (strain NIES-843 / IAM M-2473).